Consider the following 182-residue polypeptide: Crossover junction endodeoxyribonuclease RuvC (182 aa).

Catalysis depends on residues Asp-7, Glu-69, and Asp-141. The Mg(2+) site is built by Asp-7, Glu-69, and Asp-141.

It belongs to the RuvC family. As to quaternary structure, homodimer which binds Holliday junction (HJ) DNA. The HJ becomes 2-fold symmetrical on binding to RuvC with unstacked arms; it has a different conformation from HJ DNA in complex with RuvA. In the full resolvosome a probable DNA-RuvA(4)-RuvB(12)-RuvC(2) complex forms which resolves the HJ. It depends on Mg(2+) as a cofactor.

The protein resides in the cytoplasm. The enzyme catalyses Endonucleolytic cleavage at a junction such as a reciprocal single-stranded crossover between two homologous DNA duplexes (Holliday junction).. In terms of biological role, the RuvA-RuvB-RuvC complex processes Holliday junction (HJ) DNA during genetic recombination and DNA repair. Endonuclease that resolves HJ intermediates. Cleaves cruciform DNA by making single-stranded nicks across the HJ at symmetrical positions within the homologous arms, yielding a 5'-phosphate and a 3'-hydroxyl group; requires a central core of homology in the junction. The consensus cleavage sequence is 5'-(A/T)TT(C/G)-3'. Cleavage occurs on the 3'-side of the TT dinucleotide at the point of strand exchange. HJ branch migration catalyzed by RuvA-RuvB allows RuvC to scan DNA until it finds its consensus sequence, where it cleaves and resolves the cruciform DNA. The chain is Crossover junction endodeoxyribonuclease RuvC from Variovorax paradoxus (strain S110).